Reading from the N-terminus, the 132-residue chain is Large ribosomal subunit protein uL14 (132 aa).

The protein belongs to the universal ribosomal protein uL14 family. Part of the 50S ribosomal subunit. Forms a cluster with proteins L3 and L24e, part of which may contact the 16S rRNA in 2 intersubunit bridges.

In terms of biological role, binds to 23S rRNA. Forms part of two intersubunit bridges in the 70S ribosome. This is Large ribosomal subunit protein uL14 from Methanothrix thermoacetophila (strain DSM 6194 / JCM 14653 / NBRC 101360 / PT) (Methanosaeta thermophila).